A 1673-amino-acid chain; its full sequence is Calmodulin-binding transcription activator 1 (1673 aa).

The segment at residues 63 to 188 is a DNA-binding region (CG-1); the sequence is KCSSLPKERH…YLNVPAIEDC (126 aa). The Nuclear localization signal signature appears at 112-119; sequence RKKVKYRK. A disordered region spans residues 283 to 375; sequence HRIISPKVEP…LNSDPDMVDS (93 aa). Residues 302-313 show a composition bias toward basic and acidic residues; it reads EVQHNDVSEGKH. Positions 337-367 are enriched in polar residues; sequence HQSSTEVSSTNQVEVPDTTQSSPVSISSGLN. Positions 875–953 constitute an IPT/TIG domain; that stretch reads DYSPEWSYPE…ISNSVVFEYK (79 aa). Residues 990-1021 are disordered; it reads MAEMTGSQQHKQASGGGSSGGGSGSGNGGSQA. Positions 1003-1018 are enriched in gly residues; sequence SGGGSSGGGSGSGNGG. ANK repeat units follow at residues 1064-1093, 1109-1129, and 1143-1172; these read RGMTLLHLAAAQGYATLIQTLIKWRTKHAD, FSCTPLMWACALGHLEAAVVL, and LGRLPLGIARSRGHVKLAECLEHLQRDEQA. Disordered stretches follow at residues 1215–1246 and 1264–1317; these read ASTNPELRRPRSEPSNYYSSESHKDYPAPKKH and ALSL…GSQP. Over residues 1273 to 1289 the composition is skewed to polar residues; that stretch reads RKQSPSSKQSVPETLSP. IQ domains are found at residues 1547 to 1576, 1577 to 1599, and 1600 to 1622; these read QEVAAAVIQRCYRKYKQYALYKKMTQAAIL, IQSKFRSYYEQKKFQQSRRAAVL, and IQKYYRSYKKCGKRRQARRTAVI.

Belongs to the CAMTA family. As to quaternary structure, may interact with calmodulin. As to expression, normally expressed in non-neoplastic adult central nervous system tissues: detected in whole brain, cerebellum, brain cortex, occipital lobe, frontal lobe, temporal lobe, putamen. Expression levels are low in oligodendroglial tumors, and are reduced by half in oligodendroglioma and astrocytoma cases with 1p loss of heterozygosity. Detected in neuroblastic-type cultured neuroblastoma cells. Expressed in heart and kidney.

The protein resides in the nucleus. Its subcellular location is the cytoplasm. In terms of biological role, transcriptional activator. This chain is Calmodulin-binding transcription activator 1, found in Homo sapiens (Human).